Consider the following 588-residue polypeptide: MYKNRVELTTTAPVNRALPNAPDGYTPQGETCPSKRPSIRNATALSSAETSWLKARRNNTKDALKAFLSRVDLGSFNGSDYIANHSANASALPNIGIAVSGGGYRALMNGGGALQAFDNRTTNSTHSGQLGGILQSATYLSGLSGGSWLVGSIYMNNFSDVSSLQDNGSVWQFQDSIFSGPTQSTTWDIGTVEYYSQLLGAVDGKSNAGYEVSITDYWGRSLSYQLINASEGGVGYTWSSIALSKDFQAGTMPMPLVIADGRAPGEILVPANTTVFEFNPWEFGSWDKSLSAFVSLEFLGSNFSKGTLATGEKCVRGFDNAGFIMGTSSSLFNQAFLQMNNTDAPSVVKDAISAILGKIGSENNDIAVYKPNPFYRYASQSKYTSSPSLTLVDGGEDLQNIPLDPLLQPQRHVDVILAVDSSADTTTRWPNGTSLVATYERNVDSSQRNSSLPFPSVPDQNTFVNLGLNNRPTFFGCNSSNATGAPLVVYIPNAPYIYPSNVSTFDLQYNTSERNAIIENGYDVATLGNGTVDSNWPACLACAILSRSFERTNTTVPKTCSTCFKTYCWNGTINATTPGDYYPTLKLH.

Residues 15–38 (NRALPNAPDGYTPQGETCPSKRPS) are disordered. The PLA2c domain occupies 31 to 574 (TCPSKRPSIR…KTYCWNGTIN (544 aa)). Asparagine 41, asparagine 58, asparagine 77, asparagine 84, asparagine 88, asparagine 119, asparagine 123, asparagine 157, asparagine 167, asparagine 228, asparagine 272, asparagine 302, asparagine 340, asparagine 431, asparagine 449, asparagine 478, asparagine 481, asparagine 501, asparagine 510, asparagine 529, asparagine 553, asparagine 570, and asparagine 574 each carry an N-linked (GlcNAc...) asparagine glycan.

Belongs to the lysophospholipase family.

It catalyses the reaction a 1-acyl-sn-glycero-3-phosphocholine + H2O = sn-glycerol 3-phosphocholine + a fatty acid + H(+). Its function is as follows. Catalyzes the release of fatty acids from lysophospholipids. The sequence is that of Lysophospholipase 2 (plb2) from Aspergillus fumigatus (strain ATCC MYA-4609 / CBS 101355 / FGSC A1100 / Af293) (Neosartorya fumigata).